The following is a 391-amino-acid chain: Pyoverdine export membrane fusion protein PvdR (391 aa).

An N-terminal signal peptide occupies residues 1-24 (MRRTRSTRRALLVAVCLSPLIALA). The stretch at 108-180 (IEMLKAQLAE…QASLRSDEAE (73 aa)) forms a coiled coil. The interval 263–289 (LPVPPKPLDQSNQGGGSPTSGSGGQSG) is disordered. A compositionally biased stretch (gly residues) spans 275–289 (QGGGSPTSGSGGQSG).

This sequence belongs to the membrane fusion protein (MFP) (TC 8.A.1) family. In terms of assembly, part of the tripartite efflux system PvdRT-OpmQ, which is composed of an inner membrane component with both ATPase and permease domains, PvdT, a periplasmic membrane fusion protein, PvdR, and an outer membrane component, OpmQ.

Its subcellular location is the periplasm. Functionally, part of the tripartite efflux system PvdRT-OpmQ required for the secretion into the extracellular milieu of the siderophore pyoverdine (PVD), which is involved in iron acquisition. This subunit is an adapter protein that stimulates the ATPase activity of PvdT and connects the inner and outer membrane components. The system is responsible for export of newly synthesized PVD after the final steps of biosynthesis have taken place in the periplasm. It is also responsible for recycling of PVD after internalization of ferri-PVD into the periplasm by the outer-membrane receptor FpvA and release of iron from PVD, thus making PVD available for new cycles of iron uptake. In addition, can expel unwanted metals complexed with PVD from the periplasm into the extracellular medium. Does not contribute to resistance to antibiotics belonging to the classes of tetracyclines, aminoglycosides, beta-lactams and macrolides, and chloramphenicol. The chain is Pyoverdine export membrane fusion protein PvdR from Pseudomonas aeruginosa (strain ATCC 15692 / DSM 22644 / CIP 104116 / JCM 14847 / LMG 12228 / 1C / PRS 101 / PAO1).